A 320-amino-acid chain; its full sequence is Cytochrome f (320 aa).

A signal peptide spans 1–35; that stretch reads MQTRNTFSWIKEQITRSISASLMIYIITRTSISNA. Heme contacts are provided by tyrosine 36, cysteine 56, cysteine 59, and histidine 60. The chain crosses the membrane as a helical span at residues 286-306; that stretch reads VQGLLFFFAAVILAQIFLVLK.

This sequence belongs to the cytochrome f family. As to quaternary structure, the 4 large subunits of the cytochrome b6-f complex are cytochrome b6, subunit IV (17 kDa polypeptide, petD), cytochrome f and the Rieske protein, while the 4 small subunits are PetG, PetL, PetM and PetN. The complex functions as a dimer. The cofactor is heme.

It localises to the plastid. The protein resides in the chloroplast thylakoid membrane. Component of the cytochrome b6-f complex, which mediates electron transfer between photosystem II (PSII) and photosystem I (PSI), cyclic electron flow around PSI, and state transitions. This Helianthus annuus (Common sunflower) protein is Cytochrome f.